Consider the following 58-residue polypeptide: UPF0434 protein NT01EI_2448 (58 aa).

Belongs to the UPF0434 family.

In Edwardsiella ictaluri (strain 93-146), this protein is UPF0434 protein NT01EI_2448.